Reading from the N-terminus, the 237-residue chain is Histone H1E (237 aa).

Residues 1-21 (MSDPAQEVEAPVEAAPVASSP) are compositionally biased toward low complexity. Disordered stretches follow at residues 1–56 (MSDP…PVSE) and 109–237 (LQAK…KKAK). Residues 26-42 (EKAPKAPKAEKPKSDKP) show a composition bias toward basic and acidic residues. The 75-residue stretch at 50–124 (THPPVSEMVV…GASGSFKLPP (75 aa)) folds into the H15 domain. A compositionally biased stretch (low complexity) spans 182-195 (AKPAAKKAAAPKPK). Residues 200–209 (PKKEVKPKKE) show a composition bias toward basic and acidic residues. Over residues 210–237 (AKPKKAAAKPAKKPAAKPAKKPAAKKAK) the composition is skewed to basic residues.

It belongs to the histone H1/H5 family.

The protein localises to the nucleus. The protein resides in the chromosome. In terms of biological role, histones H1 are necessary for the condensation of nucleosome chains into higher-order structures. The polypeptide is Histone H1E (Chironomus tentans (Midge)).